Here is a 508-residue protein sequence, read N- to C-terminus: MAQVINTNSLSLLTQNNLNKSQSSLSSAIERLSSGLRINSAKDDAAGQAIANRFTSNIKGLTQASRNANDGISIAQTTEGALNEINNNLQRVRELSVQATNGTNSDSDLKSIQDEIQQRLEEIDRVSNQTQFNGVKVLSQDNQMKIQVGANDGETITIDLQKIDVKSLGLDGFNVNGPKEATVGDLKSSFKNVTGYDTYAVGANKYRVDVNSGAVVTDTTAPTVPDKVYVNAANGQLTTDDAENNTAVDLFKTTKSTAGTAEAKAIAGAIKGGKEGDTFDYKGVTFTIDTKTGNDGNGKVSTTINGEKVTLTVADITAGAANVDAATLQSSKNVYTSVVNGQFTFDDKTKNESAKLSDLEANNAVKGESKITVNGAEYTANAAGDKVTLAGKTMFIDKTASGVSTLINEDAAAAKKSTANPLASIDSALSKVDAVRSSLGAIQNRFDSAITNLGNTVTNLNSARSRIEDADYATEVSNMSKAQILQQAGTSVLAQANQVPQNVLSLLR.

This sequence belongs to the bacterial flagellin family.

It is found in the secreted. It localises to the bacterial flagellum. Its function is as follows. Flagellin is the subunit protein which polymerizes to form the filaments of bacterial flagella. The chain is Flagellin (fliC) from Salmonella berta.